The following is a 190-amino-acid chain: Jupiter microtubule associated homolog 2 (190 aa).

The residue at position 1 (Met1) is an N-acetylmethionine. The tract at residues 1–190 (MFQVPDSEGG…PGGKSSISFY (190 aa)) is disordered. Ser30 is subject to Phosphoserine. Thr35 is subject to Phosphothreonine. Residues 35 to 44 (TPSSRPNRMA) are compositionally biased toward polar residues. Ser45, Ser69, and Ser97 each carry phosphoserine. Over residues 110–129 (KPKDHVFLCEGEEPKSDLKA) the composition is skewed to basic and acidic residues. 2 positions are modified to phosphoserine: Ser132 and Ser144. Residues 139 to 167 (PGEKGSARKAGPAKEQEPMPTVDSHEPRL) are compositionally biased toward basic and acidic residues.

The protein belongs to the JUPITER family. Monomer. Dimer. Interacts with TPCN1. Expressed in liver, kidney, prostate, testis and uterus.

It is found in the cytoplasm. The protein localises to the nucleus. Its function is as follows. Nicotinic acid adenine dinucleotide phosphate (NAADP) binding protein required for NAADP-evoked intracellular calcium release. Confers NAADP-sensitivity to the two pore channels (TPCs) complex. Enables NAADP to activate Ca(2+) release from the endoplasmic reticulum through ryanodine receptors. (Microbial infection) Involved in the endolysosomal trafficking of human coronavirus SARS-CoV-2. The polypeptide is Jupiter microtubule associated homolog 2 (Homo sapiens (Human)).